An 815-amino-acid polypeptide reads, in one-letter code: TBC1 domain family member 5 (815 aa).

Ser44 carries the phosphoserine modification. Positions 56–64 are required for interaction with retromer; involved in interaction with ATG8 family proteins; the sequence is MKEWEELFV. The LIR 1 motif lies at 57–62; that stretch reads KEWEEL. Residues 81–359 form the Rab-GAP TBC domain; sequence LRSSRFRSIC…VVWDALFADS (279 aa). Arg448 carries the asymmetric dimethylarginine; alternate modification. Omega-N-methylarginine; alternate is present on Arg448. Residue Ser460 is modified to Phosphoserine. The interval 475-591 is disordered; the sequence is PGSMGGPVPG…SATKKDSFFS (117 aa). 2 stretches are compositionally biased toward low complexity: residues 483 to 492 and 510 to 539; these read PGNNSSSSFS and QQQQ…QQQQ. A phosphoserine mark is found at Ser546, Ser563, Ser565, Ser568, Ser578, and Ser608. Low complexity predominate over residues 556–568; that stretch reads SSKTISSSPSIES. 2 disordered regions span residues 702-733 and 754-815; these read SGQD…PDDF and QPLL…PLDI. Residues 754 to 765 show a composition bias toward polar residues; that stretch reads QPLLTLRSTSGK. Over residues 783 to 796 the composition is skewed to low complexity; the sequence is PASASASSSNPSSS. Positions 805-809 match the LIR 2 motif; the sequence is SGFTI. The tract at residues 806–811 is required for interaction with ATG8 family proteins; sequence GFTIVS. Ser811 is modified (phosphoserine).

In terms of assembly, interacts with MAP1LC3A, MAP1LC3B, MAP1LC3C, GABARAP, GABARAPL1, GABARAPL2. Interacts with VPS29 and VPS35; indicative for an association with retromer CSC subcomplex. MAP1LC3A and VPS29 compete for binding to TBC1D5. Interacts with AP2M1; indicative for an association with the AP2 complex. Interacts with ULK1 and ATG13 (phosphorylated); indicative for an association with the activated ULK1-ATG13-FIP200 complex. Interacts with ATG9A; the interactions seems to be restricted to the AP2-clathrin-associated fraction of ATG9A.

The protein localises to the endosome membrane. It is found in the cytoplasmic vesicle. It localises to the autophagosome. In terms of biological role, may act as a GTPase-activating protein for Rab family protein(s). May act as a GAP for RAB7A. Can displace RAB7A and retromer CSC subcomplex from the endosomal membrane to the cytosol; at least retromer displacement seems to require its catalytic activity. Required for retrograde transport of cargo proteins from endosomes to the trans-Golgi network (TGN); the function seems to require its catalytic activity. Involved in regulation of autophagy. May act as a molecular switch between endosomal and autophagosomal transport and is involved in reprogramming vesicle trafficking upon autophagy induction. Involved in the trafficking of ATG9A upon activation of autophagy. May regulate the recruitment of ATG9A-AP2-containing vesicles to autophagic membranes. In Mus musculus (Mouse), this protein is TBC1 domain family member 5 (Tbc1d5).